A 162-amino-acid chain; its full sequence is Large ribosomal subunit protein bL9 (162 aa).

Belongs to the bacterial ribosomal protein bL9 family.

In terms of biological role, binds to the 23S rRNA. This Chlorobaculum parvum (strain DSM 263 / NCIMB 8327) (Chlorobium vibrioforme subsp. thiosulfatophilum) protein is Large ribosomal subunit protein bL9.